The following is an 86-amino-acid chain: Neurotoxin LmNaTx34.1 (86 aa).

Residues 1-18 (MKTVILVVIALMVIEVQG) form the signal peptide. Residues 19–85 (DGYLMVRAGI…IWTYEKNTCS (67 aa)) form the LCN-type CS-alpha/beta domain. 4 disulfides stabilise this stretch: cysteine 32–cysteine 84, cysteine 36–cysteine 57, cysteine 43–cysteine 64, and cysteine 47–cysteine 66.

This sequence belongs to the long (4 C-C) scorpion toxin superfamily. Sodium channel inhibitor family. Beta subfamily. Expressed by the venom gland.

Its subcellular location is the secreted. Binds voltage-independently at site-4 of sodium channels (Nav) and shift the voltage of activation toward more negative potentials thereby affecting sodium channel activation and promoting spontaneous and repetitive firing. This chain is Neurotoxin LmNaTx34.1, found in Lychas mucronatus (Chinese swimming scorpion).